A 476-amino-acid chain; its full sequence is tRNA-2-methylthio-N(6)-dimethylallyladenosine synthase (476 aa).

The region spanning 5–122 is the MTTase N-terminal domain; that stretch reads KKLYIKTWGC…LPEMINQVKG (118 aa). 6 residues coordinate [4Fe-4S] cluster: Cys14, Cys51, Cys85, Cys159, Cys163, and Cys166. Residues 145-377 enclose the Radical SAM core domain; it reads RAEGPSAFVS…QQRINQQAMS (233 aa). The region spanning 380-443 is the TRAM domain; the sequence is RAMLGSVQRI…ANSLRGKVIR (64 aa).

This sequence belongs to the methylthiotransferase family. MiaB subfamily. As to quaternary structure, monomer. It depends on [4Fe-4S] cluster as a cofactor.

Its subcellular location is the cytoplasm. The enzyme catalyses N(6)-dimethylallyladenosine(37) in tRNA + (sulfur carrier)-SH + AH2 + 2 S-adenosyl-L-methionine = 2-methylsulfanyl-N(6)-dimethylallyladenosine(37) in tRNA + (sulfur carrier)-H + 5'-deoxyadenosine + L-methionine + A + S-adenosyl-L-homocysteine + 2 H(+). In terms of biological role, catalyzes the methylthiolation of N6-(dimethylallyl)adenosine (i(6)A), leading to the formation of 2-methylthio-N6-(dimethylallyl)adenosine (ms(2)i(6)A) at position 37 in tRNAs that read codons beginning with uridine. The sequence is that of tRNA-2-methylthio-N(6)-dimethylallyladenosine synthase from Photorhabdus laumondii subsp. laumondii (strain DSM 15139 / CIP 105565 / TT01) (Photorhabdus luminescens subsp. laumondii).